A 499-amino-acid chain; its full sequence is 6-hydroxynicotinate reductase (499 aa).

4Fe-4S ferredoxin-type domains lie at 1–29 (MFKI…YEKK) and 31–61 (KGAI…NDAP). Residues cysteine 9, cysteine 12, cysteine 15, cysteine 19, cysteine 41, cysteine 44, cysteine 47, and cysteine 51 each contribute to the [4Fe-4S] cluster site.

As to quaternary structure, homotetramer. The cofactor is an oxidized flavin. [2Fe-2S] cluster serves as cofactor. It depends on [4Fe-4S] cluster as a cofactor.

It carries out the reaction 1,4,5,6-tetrahydro-6-oxonicotinate + oxidized 2[4Fe-4S]-[ferredoxin] = 6-hydroxynicotinate + reduced 2[4Fe-4S]-[ferredoxin] + 2 H(+). It participates in cofactor degradation; nicotinate degradation; propanoate and pyruvate from 6-hydroxynicotinate: step 1/8. Functionally, catalyzes the reversible reduction of 6-hydroxynicotinate to 6-oxo-1,4,5,6-tetrahydronicotinate. The polypeptide is 6-hydroxynicotinate reductase (Eubacterium barkeri (Clostridium barkeri)).